The sequence spans 375 residues: Alcohol dehydrogenase 1 (375 aa).

Ser-2 is subject to N-acetylserine. Positions 47, 68, 98, 101, 104, 112, and 175 each coordinate Zn(2+). NAD(+) contacts are provided by residues 200 to 205, Asp-224, Lys-229, 293 to 295, and Arg-370; these read GLGGVG and LGV.

This sequence belongs to the zinc-containing alcohol dehydrogenase family. Class-I subfamily. In terms of assembly, homodimer. Zn(2+) is required as a cofactor.

It localises to the cytoplasm. It catalyses the reaction a primary alcohol + NAD(+) = an aldehyde + NADH + H(+). The catalysed reaction is a secondary alcohol + NAD(+) = a ketone + NADH + H(+). The polypeptide is Alcohol dehydrogenase 1 (ADH1) (Apteryx australis (Southern brown kiwi)).